A 655-amino-acid polypeptide reads, in one-letter code: p-hydroxybenzoic acid efflux pump subunit AaeB (655 aa).

11 helical membrane-spanning segments follow: residues 13–33 (FAVK…HFQL), 38–58 (WAVL…GGEP), 69–89 (LRII…ITMI), 93–113 (LLMI…SSLV), 121–141 (WGLS…EPLL), 152–172 (EIVI…PRSV), 370–390 (LFWL…IAVV), 407–427 (FIYG…VIIP), 431–451 (QSML…GIEV), 459–479 (MGAL…TFHF), and 482–502 (FLDS…VILL).

It belongs to the aromatic acid exporter ArAE (TC 2.A.85) family.

Its subcellular location is the cell inner membrane. In terms of biological role, forms an efflux pump with AaeA. Could function as a metabolic relief valve, allowing to eliminate certain compounds when they accumulate to high levels in the cell. This Citrobacter koseri (strain ATCC BAA-895 / CDC 4225-83 / SGSC4696) protein is p-hydroxybenzoic acid efflux pump subunit AaeB.